Consider the following 457-residue polypeptide: Cytochrome b-c1 complex subunit 1, mitochondrial (457 aa).

A mitochondrion-targeting transit peptide spans 1 to 26 (MLRTVTSKTVSNQFKRSLATAVATPK).

The protein belongs to the peptidase M16 family. UQCRC1/QCR1 subfamily. As to quaternary structure, component of the ubiquinol-cytochrome c oxidoreductase (cytochrome b-c1 complex, complex III, CIII), a multisubunit enzyme composed of 10 subunits. The complex is composed of 3 respiratory subunits cytochrome b (COB), cytochrome c1 (CYT1) and Rieske protein (RIP1), 2 core protein subunits COR1 and QCR2, and 5 low-molecular weight protein subunits QCR6, QCR7, QCR8, QCR9 and QCR10. The complex exists as an obligatory dimer and forms supercomplexes (SCs) in the inner mitochondrial membrane with a monomer or a dimer of cytochrome c oxidase (complex IV, CIV), resulting in 2 different assemblies (supercomplexes III(2)IV and III(2)IV(2)). COR1 interacts with COX5A at the CIII-CIV interface.

It localises to the mitochondrion inner membrane. In terms of biological role, component of the ubiquinol-cytochrome c oxidoreductase, a multisubunit transmembrane complex that is part of the mitochondrial electron transport chain which drives oxidative phosphorylation. The respiratory chain contains 3 multisubunit complexes succinate dehydrogenase (complex II, CII), ubiquinol-cytochrome c oxidoreductase (cytochrome b-c1 complex, complex III, CIII) and cytochrome c oxidase (complex IV, CIV), that cooperate to transfer electrons derived from NADH and succinate to molecular oxygen, creating an electrochemical gradient over the inner membrane that drives transmembrane transport and the ATP synthase. The cytochrome b-c1 complex catalyzes electron transfer from ubiquinol to cytochrome c, linking this redox reaction to translocation of protons across the mitochondrial inner membrane, with protons being carried across the membrane as hydrogens on the quinol. In the process called Q cycle, 2 protons are consumed from the matrix, 4 protons are released into the intermembrane space and 2 electrons are passed to cytochrome c. This chain is Cytochrome b-c1 complex subunit 1, mitochondrial (COR1), found in Saccharomyces cerevisiae (strain ATCC 204508 / S288c) (Baker's yeast).